The sequence spans 345 residues: Large ribosomal subunit protein uL4 (345 aa).

N-acetylalanine is present on Ala2.

It belongs to the universal ribosomal protein uL4 family.

The protein is Large ribosomal subunit protein uL4 (rpl-4) of Caenorhabditis elegans.